Here is a 273-residue protein sequence, read N- to C-terminus: Dermonecrotic toxin SdSicTox-betaIIB1bxi (273 aa).

The active site involves histidine 4. Mg(2+)-binding residues include glutamate 24 and aspartate 26. Residue histidine 40 is the Nucleophile of the active site. Intrachain disulfides connect cysteine 44/cysteine 50 and cysteine 46/cysteine 189. Aspartate 84 is a Mg(2+) binding site.

Belongs to the arthropod phospholipase D family. Class II subfamily. Requires Mg(2+) as cofactor. In terms of tissue distribution, expressed by the venom gland.

It is found in the secreted. It catalyses the reaction an N-(acyl)-sphingosylphosphocholine = an N-(acyl)-sphingosyl-1,3-cyclic phosphate + choline. The enzyme catalyses an N-(acyl)-sphingosylphosphoethanolamine = an N-(acyl)-sphingosyl-1,3-cyclic phosphate + ethanolamine. The catalysed reaction is a 1-acyl-sn-glycero-3-phosphocholine = a 1-acyl-sn-glycero-2,3-cyclic phosphate + choline. It carries out the reaction a 1-acyl-sn-glycero-3-phosphoethanolamine = a 1-acyl-sn-glycero-2,3-cyclic phosphate + ethanolamine. Its function is as follows. Dermonecrotic toxins cleave the phosphodiester linkage between the phosphate and headgroup of certain phospholipids (sphingolipid and lysolipid substrates), forming an alcohol (often choline) and a cyclic phosphate. This toxin acts on sphingomyelin (SM). It may also act on ceramide phosphoethanolamine (CPE), lysophosphatidylcholine (LPC) and lysophosphatidylethanolamine (LPE), but not on lysophosphatidylserine (LPS), and lysophosphatidylglycerol (LPG). It acts by transphosphatidylation, releasing exclusively cyclic phosphate products as second products. Induces dermonecrosis, hemolysis, increased vascular permeability, edema, inflammatory response, and platelet aggregation. The polypeptide is Dermonecrotic toxin SdSicTox-betaIIB1bxi (Sicarius cf. damarensis (strain GJB-2008) (Six-eyed sand spider)).